The chain runs to 255 residues: Flagellar brake protein YcgR (255 aa).

The PilZ domain occupies 122–240; that stretch reads QRRTYFRINT…ERDLQQVIFE (119 aa).

The protein belongs to the YcgR family. In terms of assembly, monomer. Interacts with the flagellar basal bodies.

Its subcellular location is the bacterial flagellum basal body. Its function is as follows. Acts as a flagellar brake, regulating swimming and swarming in a bis-(3'-5') cyclic diguanylic acid (c-di-GMP)-dependent manner. Binds 1 c-di-GMP dimer per subunit. Increasing levels of c-di-GMP lead to decreased motility. In Pectobacterium carotovorum subsp. carotovorum (strain PC1), this protein is Flagellar brake protein YcgR.